A 428-amino-acid polypeptide reads, in one-letter code: Ribosomal RNA small subunit methyltransferase B (428 aa).

S-adenosyl-L-methionine-binding positions include 253–259, aspartate 276, aspartate 302, and aspartate 321; that span reads CAAPGGK. Catalysis depends on cysteine 374, which acts as the Nucleophile.

Belongs to the class I-like SAM-binding methyltransferase superfamily. RsmB/NOP family.

It is found in the cytoplasm. The catalysed reaction is cytidine(967) in 16S rRNA + S-adenosyl-L-methionine = 5-methylcytidine(967) in 16S rRNA + S-adenosyl-L-homocysteine + H(+). Specifically methylates the cytosine at position 967 (m5C967) of 16S rRNA. In Enterobacter sp. (strain 638), this protein is Ribosomal RNA small subunit methyltransferase B.